A 128-amino-acid polypeptide reads, in one-letter code: Aspartate 1-decarboxylase (128 aa).

The Schiff-base intermediate with substrate; via pyruvic acid role is filled by Ser-25. Ser-25 carries the post-translational modification Pyruvic acid (Ser). Thr-57 serves as a coordination point for substrate. The active-site Proton donor is Tyr-58. 73–75 (GSA) is a substrate binding site.

It belongs to the PanD family. Heterooctamer of four alpha and four beta subunits. Pyruvate is required as a cofactor. Post-translationally, is synthesized initially as an inactive proenzyme, which is activated by self-cleavage at a specific serine bond to produce a beta-subunit with a hydroxyl group at its C-terminus and an alpha-subunit with a pyruvoyl group at its N-terminus.

The protein resides in the cytoplasm. It catalyses the reaction L-aspartate + H(+) = beta-alanine + CO2. The protein operates within cofactor biosynthesis; (R)-pantothenate biosynthesis; beta-alanine from L-aspartate: step 1/1. Its function is as follows. Catalyzes the pyruvoyl-dependent decarboxylation of aspartate to produce beta-alanine. This is Aspartate 1-decarboxylase from Burkholderia vietnamiensis (strain G4 / LMG 22486) (Burkholderia cepacia (strain R1808)).